A 3014-amino-acid chain; its full sequence is Genome polyprotein (3014 aa).

Residue Ser-2 is modified to N-acetylserine; by host. The segment at Ser-2–Lys-23 is interaction with STAT1. The segment at Ser-2–Pro-58 is interaction with EIF2AK2/PKR. An interaction with DDX3X region spans residues Ser-2–Arg-59. Positions Ser-2–Ser-75 are disordered. Residues Ser-2 to Asn-168 lie on the Cytoplasmic side of the membrane. 2 short sequence motifs (nuclear localization signal) span residues Pro-5–Arg-13 and Pro-38–Lys-43. The segment covering Pro-7–Asn-16 has biased composition (basic residues). Ser-53 is subject to Phosphoserine; by host. Short sequence motifs (nuclear localization signal) lie at residues Pro-58–Pro-64 and Pro-66–Pro-71. Over residues Pro-58 to Thr-72 the composition is skewed to basic residues. Phosphoserine; by host is present on residues Ser-99 and Ser-116. Residues Pro-112–Ala-152 are important for endoplasmic reticulum and mitochondrial localization. The interaction with APOA2 stretch occupies residues Val-122–Pro-173. Residues Tyr-164–Gly-167 form an important for lipid droplets localization region. Residues Leu-169–Ala-189 traverse the membrane as a helical segment. Positions Val-178 to Ala-191 are cleaved as a propeptide — ER anchor for the core protein, removed in mature form by host signal peptidase. At Ser-190–Ala-358 the chain is on the lumenal side. Asn-196, Asn-209, and Asn-234 each carry an N-linked (GlcNAc...) asparagine; by host glycan. Residues Leu-265–Arg-296 are important for fusion. Residue Asn-305 is glycosylated (N-linked (GlcNAc...) asparagine; by host). A helical membrane pass occupies residues Ala-359 to Ala-379. Residues Gly-380–Leu-726 lie on the Lumenal side of the membrane. Positions Thr-385–Gln-412 are HVR1. N-linked (GlcNAc...) (high mannose) asparagine; by host glycans are attached at residues Asn-417, Asn-423, and Asn-430. 4 disulfide bridges follow: Cys-429-Cys-553, Cys-452-Cys-459, Cys-487-Cys-495, and Cys-504-Cys-509. N-linked (GlcNAc...) asparagine; by host glycosylation is present at Asn-448. An HVR2 region spans residues Ala-475 to Gly-479. Positions Ser-481–Pro-494 are CD81-binding 1. Asn-533 is a glycosylation site (N-linked (GlcNAc...) asparagine; by host). Residues Pro-545–Gly-552 form a CD81-binding 2 region. An N-linked (GlcNAc...) asparagine; by host glycan is attached at Asn-557. A disulfide bridge connects residues Cys-565 and Cys-570. Asn-578 is a glycosylation site (N-linked (GlcNAc...) asparagine; by host). 3 cysteine pairs are disulfide-bonded: Cys-582-Cys-586, Cys-598-Cys-621, and Cys-608-Cys-645. N-linked (GlcNAc...) (high mannose) asparagine; by host glycosylation is found at Asn-624 and Asn-646. The cysteines at positions 653 and 678 are disulfide-linked. Residues Ala-661 to Gln-672 are PKR/eIF2-alpha phosphorylation homology domain (PePHD). A helical membrane pass occupies residues Leu-727 to Ala-747. The Lumenal segment spans residues Thr-748 to Ala-758. The chain crosses the membrane as a helical span at residues Ala-759 to Val-779. The Cytoplasmic segment spans residues Lys-780–Leu-783. A helical transmembrane segment spans residues Val-784–Arg-804. The Lumenal portion of the chain corresponds to Pro-805–Ser-814. The helical transmembrane segment at Asp-815–Gly-835 threads the bilayer. Residues Tyr-836–His-882 lie on the Cytoplasmic side of the membrane. A helical membrane pass occupies residues Pro-883–Leu-903. Topologically, residues Gln-904–Leu-929 are lumenal. The 124-residue stretch at Gln-904–Leu-1027 folds into the Peptidase C18 domain. The protease NS2-3 stretch occupies residues His-905–Arg-1207. Cys-923 carries the S-palmitoyl cysteine; by host lipid modification. Residues Val-930–Ile-950 form a helical membrane-spanning segment. Residues Val-930–Ile-950 are interaction with host SCPS1. The Cytoplasmic portion of the chain corresponds to Tyr-951–Thr-1658. Catalysis depends on for protease NS2 activity; shared with dimeric partner residues His-953, Glu-973, and Cys-994. Positions Ala-1028–Pro-1209 constitute a Peptidase S29 domain. Active-site charge relay system; for serine protease NS3 activity residues include His-1084 and Asp-1108. Cys-1124 and Cys-1126 together coordinate Zn(2+). Residue Ser-1166 is the Charge relay system; for serine protease NS3 activity of the active site. Residues Cys-1172 and His-1176 each contribute to the Zn(2+) site. In terms of domain architecture, Helicase ATP-binding spans Pro-1218–Ile-1351. Ala-1231–Ser-1238 is an ATP binding site. Mg(2+) is bound by residues Ser-1238 and Glu-1318. Positions Asp-1317–His-1320 match the DECH box motif. Residues Asn-1362–Arg-1539 form the Helicase C-terminal domain. The segment at Gln-1487 to Ile-1499 is RNA-binding. A helical transmembrane segment spans residues Ser-1659–Gly-1679. The tract at residues Ser-1680–Gly-1691 is NS3-binding. Residues Ser-1680–Gln-1806 lie on the Cytoplasmic side of the membrane. A helical transmembrane segment spans residues Thr-1807–Ala-1827. Residues Thr-1828 to Ala-1829 lie on the Lumenal side of the membrane. The helical transmembrane segment at Phe-1830–Ile-1850 threads the bilayer. Position 1851 (Asp-1851) is a topological domain, cytoplasmic. Residues Ile-1852–Gly-1872 traverse the membrane as a helical segment. The Lumenal segment spans residues Glu-1873–Asn-1882. The chain crosses the membrane as a helical span at residues Leu-1883–Leu-1903. Over Arg-1904–Cys-1973 the chain is Cytoplasmic. Residue Cys-1973 is the site of S-palmitoyl cysteine; by host attachment. An intramembrane segment occupies Asp-1974–Gln-2003. At Leu-2004–Arg-2993 the chain is on the cytoplasmic side. 4 residues coordinate Zn(2+): Cys-2012, Cys-2030, Cys-2032, and Cys-2053. Positions Glu-2121 to Ala-2209 are FKBP8-binding. Residues Glu-2121–Pro-2334 are transcriptional activation. The interaction with non-structural protein 4A stretch occupies residues Pro-2136–Pro-2140. The interval Arg-2190–Glu-2441 is interaction with host SKP2. Phosphoserine; by host occurs at positions 2195, 2198, 2202, 2205, 2208, and 2211. Residues Ser-2211 to Lys-2250 form an ISDR region. Residues Ser-2211–Phe-2276 are interaction with EIF2AK2/PKR. Residues Lys-2250 to Tyr-2307 are NS4B-binding. Residues Glu-2300 to Pro-2378 form a V3 region. 2 disordered regions span residues Cys-2315 to Val-2342 and Pro-2359 to Ser-2412. The segment covering Pro-2316–Leu-2327 has biased composition (pro residues). The short motif at Pro-2323–Pro-2326 is the SH3-binding element. The Nuclear localization signal signature appears at Pro-2328–Leu-2337. Residues Ile-2361–Asp-2375 are compositionally biased toward polar residues. The segment covering Ser-2376–Asn-2385 has biased composition (basic and acidic residues). Residue Ser-2465 is modified to Phosphoserine; by host. Residues Pro-2637–Asp-2755 form the RdRp catalytic domain. 3 residues coordinate Mg(2+): Asp-2643, Asp-2741, and Asp-2742. The chain crosses the membrane as a helical span at residues Asn-2994–Arg-3014.

Belongs to the hepacivirus polyprotein family. As to quaternary structure, homooligomer. Interacts with E1 (via C-terminus). Interacts with the non-structural protein 5A. Interacts (via N-terminus) with host STAT1 (via SH2 domain); this interaction results in decreased STAT1 phosphorylation and ubiquitin-mediated proteasome-dependent STAT1 degradation, leading to decreased IFN-stimulated gene transcription. Interacts with host STAT3; this interaction constitutively activates STAT3. Interacts with host LTBR receptor. Interacts with host TNFRSF1A receptor and possibly induces apoptosis. Interacts with host HNRPK. Interacts with host YWHAE. Interacts with host UBE3A/E6AP. Interacts with host DDX3X. Interacts with host APOA2. Interacts with host RXRA protein. Interacts with host SP110 isoform 3/Sp110b; this interaction sequesters the transcriptional corepressor SP110 away from the nucleus. Interacts with host CREB3 nuclear transcription protein; this interaction triggers cell transformation. Interacts with host ACY3. Interacts with host C1QR1. Interacts with host RBM24; this interaction, which enhances the interaction of the mature core protein with 5'-UTR, may inhibit viral translation and favor replication. Interacts with host EIF2AK2/PKR; this interaction induces the autophosphorylation of EIF2AK2. Part of the viral assembly initiation complex composed of NS2, E1, E2, NS3, NS4A, NS5A and the mature core protein. Forms a heterodimer with envelope glycoprotein E2. Interacts with mature core protein. Interacts with protease NS2. The heterodimer E1/E2 interacts with host CLDN1; this interaction plays a role in viral entry into host cell. Interacts with host SPSB2 (via C-terminus). Part of the viral assembly initiation complex composed of NS2, E1, E2, NS3, NS4A, NS5A and the mature core protein. Interacts with host NEURL3; this interaction prevents E1 binding to glycoprotein E2. In terms of assembly, forms a heterodimer with envelope glycoprotein E1. Interacts with host CD81 and SCARB1 receptors; these interactions play a role in viral entry into host cell. Interacts with host EIF2AK2/PKR; this interaction inhibits EIF2AK2 and probably allows the virus to evade the innate immune response. Interacts with host CD209/DC-SIGN and CLEC4M/DC-SIGNR. Interact with host SPCS1; this interaction is essential for viral particle assembly. Interacts with protease NS2. The heterodimer E1/E2 interacts with host CLDN1; this interaction plays a role in viral entry into host cell. Part of the viral assembly initiation complex composed of NS2, E1, E2, NS3, NS4A, NS5A and the mature core protein. Interacts with host SLC3A2/4F2hc; the interaction may facilitate viral entry into host cell. Interacts with human PLSCR1. As to quaternary structure, homohexamer. Homoheptamer. Interacts with protease NS2. Homodimer. Interacts with host SPCS1; this interaction is essential for viral particle assembly. Interacts with envelope glycoprotein E1. Interacts with envelope glycoprotein E2. Interacts with viroporin p7. Interacts with serine protease/helicase NS3. Part of the replication complex composed of NS2, NS3, NS4A, NS4B, NS5A and the RNA-directed RNA polymerase embedded in an ER-derived membranous web. Part of the viral assembly initiation complex composed of NS2, E1, E2, NS3, NS4A, NS5A and the mature core protein. In terms of assembly, interacts with protease NS2. Interacts with non-structural protein 4A; this interaction stabilizes the folding of NS3 serine protease. NS3-NS4A interaction is essential for NS3 activation and allows membrane anchorage of the latter. NS3/NS4A complex also prevents phosphorylation of host IRF3, thus preventing the establishment of dsRNA induced antiviral state. Interacts with host MAVS; this interaction leads to the cleavage and inhibition of host MAVS. Interacts with host TICAM1; this interaction leads to the cleavage and inhibition of host TICAM1. Interacts with host TANK-binding kinase/TBK1; this interaction results in the inhibition of the association between TBK1 and IRF3, which leads to the inhibition of IRF3 activation. Interacts with host RBM24. Part of the replication complex composed of NS2, NS3, NS4A, NS4B, NS5A and the RNA-directed RNA polymerase embedded in an ER-derived membranous web. Part of the viral assembly initiation complex composed of NS2, E1, E2, NS3, NS4A, NS5A and the mature core protein. As to quaternary structure, interacts with NS3 serine protease; this interaction stabilizes the folding of NS3 serine protease. NS3-NS4A interaction is essential for NS3 activation and allows membrane anchorage of the latter. Interacts with non-structural protein 5A (via N-terminus). Part of the replication complex composed of NS2, NS3, NS4A, NS4B, NS5A and the RNA-directed RNA polymerase embedded in an ER-derived membranous web. Part of the viral assembly initiation complex composed of NS2, E1, E2, NS3, NS4A, NS5A and the mature core protein. Homomultimer. Interacts with non-structural protein NS5A. Interacts with host PLA2G4C; this interaction likely initiates the recruitment of replication complexes to lipid droplets. Interacts with host STING; this interaction disrupts the interaction between STING and TBK1 thereby suppressing the interferon signaling. Part of the replication complex composed of NS2, NS3, NS4A, NS4B, NS5A and the RNA-directed RNA polymerase embedded in an ER-derived membranous web. In terms of assembly, monomer. Homodimer; dimerization is required for RNA-binding. Interacts with the mature core protein. Interacts (via N-terminus) with non-structural protein 4A. Interacts with non-structural protein 4B. Interacts (via region D2) with RNA-directed RNA polymerase. Part of the viral assembly initiation complex composed of NS2, E1, E2, NS3, NS4A, NS5A and the mature core protein. Part of the replication complex composed of NS2, NS3, NS4A, NS4B, NS5A and the RNA-directed RNA polymerase embedded in an ER-derived membranous web. Interacts with host GRB2. Interacts with host BIN1. Interacts with host PIK3R1. Interacts with host SRCAP. Interacts with host FKBP8. Interacts (via C-terminus) with host VAPB (via MSP domain). Interacts with host EIF2AK2/PKR; this interaction leads to disruption of EIF2AK2 dimerization by NS5A and probably allows the virus to evade the innate immune response. Interacts (via N-terminus) with host PACSIN2 (via N-terminus); this interaction attenuates protein kinase C alpha-mediated phosphorylation of PACSIN2 by disrupting the interaction between PACSIN2 and PRKCA. Interacts (via N-terminus) with host SRC kinase (via SH2 domain). Interacts with most Src-family kinases. Interacts with host IFI27 and SKP2; promotes the ubiquitin-mediated proteasomal degradation of NS5A. Interacts with host GPS2. Interacts with host TNFRSF21; this interaction allows the modulation by the virus of JNK, p38 MAPK, STAT3, and Akt signaling pathways in a DR6-dependent manner. Interacts (via N-terminus) with host CIDEB (via N-terminus); this interaction seems to regulate the association of HCV particles with APOE. Interacts with host CHKA/Choline Kinase-alpha; CHKA bridges host PI4KA and NS5A and potentiates NS5A-stimulated PI4KA activity, which then facilitates the targeting of the ternary complex to the ER for viral replication. Interacts with host SPSB2 (via C-terminus); this interaction targets NS5A for ubiquitination and degradation. Interacts with host RAB18; this interaction may promote the association of NS5A and other replicase components with lipid droplets. Interacts (via region D2) with host PPIA/CYPA; the interaction stimulates RNA-binding ability of NS5A and is dependent on the peptidyl-prolyl cis-trans isomerase activity of PPIA/CYPA. Interacts with host TRIM14; this interaction induces the degradation of NS5A. As to quaternary structure, homooligomer. Interacts with non-structural protein 5A. Interacts with host VAPB. Interacts with host PRK2/PKN2. Interacts with host HNRNPA1 and SEPT6; these interactions facilitate viral replication. Part of the replication complex composed of NS2, NS3, NS4A, NS4B, NS5A and the RNA-directed RNA polymerase. Zn(2+) is required as a cofactor. Requires Mg(2+) as cofactor. Specific enzymatic cleavages in vivo yield mature proteins. The structural proteins, core, E1, E2 and p7 are produced by proteolytic processing by host signal peptidases. The core protein precursor is synthesized as a 23 kDa, which is retained in the ER membrane through the hydrophobic signal peptide. Cleavage by the signal peptidase releases the 21 kDa mature core protein. The cleavage of the core protein precursor occurs between aminoacids 176 and 188 but the exact cleavage site is not known. Some degraded forms of the core protein appear as well during the course of infection. The other proteins (p7, NS2, NS3, NS4A, NS4B, NS5A and NS5B) are cleaved by the viral proteases. Autoprocessing between NS2 and NS3 is mediated by the NS2 cysteine protease catalytic domain and regulated by the NS3 N-terminal domain. In terms of processing, phosphorylated by host PKC and PKA. Post-translationally, ubiquitinated; mediated by UBE3A and leading to core protein subsequent proteasomal degradation. Highly N-glycosylated. In terms of processing, palmitoylation is required for NS2/3 autoprocessing and E2 recruitment to membranes. Post-translationally, palmitoylated. This modification may play a role in its polymerization or in protein-protein interactions. Phosphorylated on serines in a basal form termed p56. p58 is a hyperphosphorylated form of p56. p56 and p58 coexist in the cell in roughly equivalent amounts. Hyperphosphorylation is dependent on the presence of NS4A. Host CSNK1A1/CKI-alpha or RPS6KB1 kinases may be responsible for NS5A phosphorylation. In terms of processing, tyrosine phosphorylation is essential for the interaction with host SRC. Post-translationally, the N-terminus is phosphorylated by host PRK2/PKN2.

It is found in the host endoplasmic reticulum membrane. Its subcellular location is the host mitochondrion membrane. The protein localises to the virion. It localises to the host cytoplasm. The protein resides in the host nucleus. It is found in the host lipid droplet. Its subcellular location is the virion membrane. The protein localises to the host mitochondrion. It localises to the host cell membrane. The protein resides in the host perinuclear region. It catalyses the reaction Hydrolysis of four peptide bonds in the viral precursor polyprotein, commonly with Asp or Glu in the P6 position, Cys or Thr in P1 and Ser or Ala in P1'.. The enzyme catalyses a ribonucleoside 5'-triphosphate + H2O = a ribonucleoside 5'-diphosphate + phosphate + H(+). The catalysed reaction is ATP + H2O = ADP + phosphate + H(+). It carries out the reaction RNA(n) + a ribonucleoside 5'-triphosphate = RNA(n+1) + diphosphate. Its activity is regulated as follows. Inhibited by the antiviral drug hexamethylene amiloride. Inhibition by amantadine appears to be genotype-dependent. Also inhibited by long-alkyl-chain iminosugar derivatives. Activity is up-regulated by PRK2/PKN2-mediated phosphorylation. Its function is as follows. Packages viral RNA to form a viral nucleocapsid, and promotes virion budding. Participates in the viral particle production as a result of its interaction with the non-structural protein 5A. Binds RNA and may function as a RNA chaperone to induce the RNA structural rearrangements taking place during virus replication. Modulates viral translation initiation by interacting with viral IRES and 40S ribosomal subunit. Affects various cell signaling pathways, host immunity and lipid metabolism. Prevents the establishment of cellular antiviral state by blocking the interferon-alpha/beta (IFN-alpha/beta) and IFN-gamma signaling pathways and by blocking the formation of phosphorylated STAT1 and promoting ubiquitin-mediated proteasome-dependent degradation of STAT1. Activates STAT3 leading to cellular transformation. Regulates the activity of cellular genes, including c-myc and c-fos. May repress the promoter of p53, and sequester CREB3 and SP110 isoform 3/Sp110b in the cytoplasm. Represses cell cycle negative regulating factor CDKN1A, thereby interrupting an important check point of normal cell cycle regulation. Targets transcription factors involved in the regulation of inflammatory responses and in the immune response: suppresses TNF-induced NF-kappa-B activation, and activates AP-1. Binds to dendritic cells (DCs) via C1QR1, resulting in down-regulation of T-lymphocytes proliferation. Alters lipid metabolism by interacting with hepatocellular proteins involved in lipid accumulation and storage. Induces up-regulation of FAS promoter activity, and thereby contributes to the increased triglyceride accumulation in hepatocytes (steatosis). In terms of biological role, forms a heterodimer with envelope glycoprotein E2, which mediates virus attachment to the host cell, virion internalization through clathrin-dependent endocytosis and fusion with host membrane. Fusion with the host cell is most likely mediated by both E1 and E2, through conformational rearrangements of the heterodimer required for fusion rather than a classical class II fusion mechanism. E1/E2 heterodimer binds host apolipoproteins such as APOB and ApoE thereby forming a lipo-viro-particle (LVP). APOE associated to the LVP allows the initial virus attachment to cell surface receptors such as the heparan sulfate proteoglycans (HSPGs), syndecan-1 (SDC1), syndecan-1 (SDC2), the low-density lipoprotein receptor (LDLR) and scavenger receptor class B type I (SCARB1). The cholesterol transfer activity of SCARB1 allows E2 exposure and binding of E2 to SCARB1 and the tetraspanin CD81. E1/E2 heterodimer binding on CD81 activates the epithelial growth factor receptor (EGFR) signaling pathway. Diffusion of the complex E1-E2-EGFR-SCARB1-CD81 to the cell lateral membrane allows further interaction with Claudin 1 (CLDN1) and occludin (OCLN) to finally trigger HCV entry. Forms a heterodimer with envelope glycoprotein E1, which mediates virus attachment to the host cell, virion internalization through clathrin-dependent endocytosis and fusion with host membrane. Fusion with the host cell is most likely mediated by both E1 and E2, through conformational rearrangements of the heterodimer required for fusion rather than a classical class II fusion mechanism. The interaction between envelope glycoprotein E2 and host apolipoprotein E/APOE allows the proper assembly, maturation and infectivity of the viral particles. This interaction is probably promoted via the up-regulation of cellular autophagy by the virus. E1/E2 heterodimer binds host apolipoproteins such as APOB and APOE thereby forming a lipo-viro-particle (LVP). APOE associated to the LVP allows the initial virus attachment to cell surface receptors such as the heparan sulfate proteoglycans (HSPGs), syndecan-1 (SDC1), syndecan-1 (SDC2), the low-density lipoprotein receptor (LDLR) and scavenger receptor class B type I (SCARB1). The cholesterol transfer activity of SCARB1 allows E2 exposure and binding of E2 to SCARB1 and the tetraspanin CD81. E1/E2 heterodimer binding on CD81 activates the epithelial growth factor receptor (EGFR) signaling pathway. Diffusion of the complex E1-E2-EGFR-SCARB1-CD81 to the cell lateral membrane allows further interaction with Claudin 1 (CLDN1) and occludin (OCLN) to finally trigger HCV entry. Inhibits host EIF2AK2/PKR activation, preventing the establishment of an antiviral state. Viral ligand for CD209/DC-SIGN and CLEC4M/DC-SIGNR, which are respectively found on dendritic cells (DCs), and on liver sinusoidal endothelial cells and macrophage-like cells of lymph node sinuses. These interactions allow the capture of circulating HCV particles by these cells and subsequent facilitated transmission to permissive cells such as hepatocytes and lymphocyte subpopulations. The interaction between E2 and host amino acid transporter complex formed by SLC3A2 and SLC7A5/LAT1 may facilitate viral entry into host cell. Functionally, ion channel protein that acts as a viroporin and plays an essential role in the assembly, envelopment and secretion of viral particles. Regulates the host cell secretory pathway, which induces the intracellular retention of viral glycoproteins and favors assembly of viral particles. Creates a pore in acidic organelles and releases Ca(2+) and H(+) in the cytoplasm of infected cells, leading to a productive viral infection. High levels of cytoplasmic Ca(2+) may trigger membrane trafficking and transport of viral ER-associated proteins to viroplasms, sites of viral genome replication. This ionic imbalance induces the assembly of the inflammasome complex, which triggers the maturation of pro-IL-1beta into IL-1beta through the action of caspase-1. Targets also host mitochondria and induces mitochondrial depolarization. In addition of its role as a viroporin, acts as a lipid raft adhesion factor. Its function is as follows. Cysteine protease required for the proteolytic auto-cleavage between the non-structural proteins NS2 and NS3. The N-terminus of NS3 is required for the function of NS2 protease (active region NS2-3). Promotes the initiation of viral particle assembly by mediating the interaction between structural and non-structural proteins. In terms of biological role, displays three enzymatic activities: serine protease with a chymotrypsin-like fold, NTPase and RNA helicase. NS3 serine protease, in association with NS4A, is responsible for the cleavages of NS3-NS4A, NS4A-NS4B, NS4B-NS5A and NS5A-NS5B. The NS3/NS4A complex prevents phosphorylation of host IRF3, thus preventing the establishment of dsRNA induced antiviral state. The NS3/NS4A complex induces host amino acid transporter component SLC3A2, thus contributing to HCV propagation. NS3 RNA helicase binds to RNA and unwinds both dsDNA and dsRNA in the 3' to 5' direction, and likely resolves RNA complicated stable secondary structures in the template strand. Binds a single ATP and catalyzes the unzipping of a single base pair of dsRNA. Inhibits host antiviral proteins TBK1 and IRF3 thereby preventing the establishment of an antiviral state. Cleaves host MAVS/CARDIF thereby preventing the establishment of an antiviral state. Cleaves host TICAM1/TRIF, thereby disrupting TLR3 signaling and preventing the establishment of an antiviral state. Induces a specific membrane alteration that serves as a scaffold for the virus replication complex. This membrane alteration gives rise to the so-called ER-derived membranous web that contains the replication complex. NS4B self-interaction contributes to its function in membranous web formation. Promotes host TRIF protein degradation in a CASP8-dependent manner thereby inhibiting host TLR3-mediated interferon signaling. Disrupts the interaction between STING and TBK1 contributing to the inhibition of interferon signaling. Functionally, phosphorylated protein that is indispensable for viral replication and assembly. Both hypo- and hyperphosphorylated states are required for the viral life cycle. The hyperphosphorylated form of NS5A is an inhibitor of viral replication. Involved in RNA-binding and especially in binding to the viral genome. Zinc is essential for RNA-binding. Participates in the viral particle production as a result of its interaction with the mature viral core protein. Its interaction with host VAPB may target the viral replication complex to vesicles. Down-regulates viral IRES translation initiation. Mediates interferon resistance, presumably by interacting with and inhibiting host EIF2AK2/PKR. Prevents BIN1-induced apoptosis. Acts as a transcriptional activator of some host genes important for viral replication when localized in the nucleus. Via the interaction with host PACSIN2, modulates lipid droplet formation in order to promote virion assembly. Modulates TNFRSF21/DR6 signaling pathway for viral propagation. Its function is as follows. RNA-dependent RNA polymerase that performs primer-template recognition and RNA synthesis during viral replication. Initiates RNA transcription/replication at a flavin adenine dinucleotide (FAD), resulting in a 5'- FAD cap on viral RNAs. In this way, recognition of viral 5' RNA by host pattern recognition receptors can be bypassed, thereby evading activation of antiviral pathways. This Hepatitis C virus genotype 5a (isolate EUH1480) (HCV) protein is Genome polyprotein.